The primary structure comprises 353 residues: Phospho-N-acetylmuramoyl-pentapeptide-transferase (353 aa).

Helical transmembrane passes span 22–42, 65–85, 88–108, 129–149, 161–181, 192–212, 228–248, 256–276, 281–301, and 330–350; these read FAFF…ITWA, TPTM…LFCI, DNIF…IGLI, LLAQ…SSEL, PLFD…ISSS, GLAT…LYLS, GLGE…GFLW, VFMG…LAVI, ILLL…ILQV, and KIIV…LASI.

Belongs to the glycosyltransferase 4 family. MraY subfamily. Mg(2+) serves as cofactor.

The protein localises to the cell inner membrane. It catalyses the reaction UDP-N-acetyl-alpha-D-muramoyl-L-alanyl-gamma-D-glutamyl-meso-2,6-diaminopimeloyl-D-alanyl-D-alanine + di-trans,octa-cis-undecaprenyl phosphate = di-trans,octa-cis-undecaprenyl diphospho-N-acetyl-alpha-D-muramoyl-L-alanyl-D-glutamyl-meso-2,6-diaminopimeloyl-D-alanyl-D-alanine + UMP. It participates in cell wall biogenesis; peptidoglycan biosynthesis. In terms of biological role, catalyzes the initial step of the lipid cycle reactions in the biosynthesis of the cell wall peptidoglycan: transfers peptidoglycan precursor phospho-MurNAc-pentapeptide from UDP-MurNAc-pentapeptide onto the lipid carrier undecaprenyl phosphate, yielding undecaprenyl-pyrophosphoryl-MurNAc-pentapeptide, known as lipid I. In Campylobacter jejuni subsp. jejuni serotype O:2 (strain ATCC 700819 / NCTC 11168), this protein is Phospho-N-acetylmuramoyl-pentapeptide-transferase.